A 140-amino-acid chain; its full sequence is Small ribosomal subunit protein uS12 (140 aa).

Asp102 is modified (3-methylthioaspartic acid).

Belongs to the universal ribosomal protein uS12 family. In terms of assembly, part of the 30S ribosomal subunit. Contacts proteins S8 and S17. May interact with IF1 in the 30S initiation complex.

Functionally, with S4 and S5 plays an important role in translational accuracy. In terms of biological role, interacts with and stabilizes bases of the 16S rRNA that are involved in tRNA selection in the A site and with the mRNA backbone. Located at the interface of the 30S and 50S subunits, it traverses the body of the 30S subunit contacting proteins on the other side and probably holding the rRNA structure together. The combined cluster of proteins S8, S12 and S17 appears to hold together the shoulder and platform of the 30S subunit. The sequence is that of Small ribosomal subunit protein uS12 from Bacillus cereus (strain G9842).